We begin with the raw amino-acid sequence, 153 residues long: Ribosome maturation factor RimP (153 aa).

This sequence belongs to the RimP family.

Its subcellular location is the cytoplasm. Required for maturation of 30S ribosomal subunits. This Desulforamulus reducens (strain ATCC BAA-1160 / DSM 100696 / MI-1) (Desulfotomaculum reducens) protein is Ribosome maturation factor RimP.